The primary structure comprises 147 residues: MDSVKPIVKLEQAGSSNLEKASLLPCHISYDGPAPVFEYFHDKIQISNNTHSKTTVCLRGRELNGEELDLPENYTGQVVLCDDGLENDETSEKEIPESTWCINSTFEKVMLWNRDNMRSSEKDQWKRGVLEWIQFASKVKFNCSLYN.

This is an uncharacterized protein from Schizosaccharomyces pombe (strain 972 / ATCC 24843) (Fission yeast).